The primary structure comprises 688 residues: G protein-coupled receptor kinase 3 (688 aa).

The segment at 1 to 190 (MADLEAVLAD…ELNIHLTMND (190 aa)) is N-terminal. An RGS domain is found at 54-175 (TFDKIFNQRI…MESDKFTRFC (122 aa)). One can recognise a Protein kinase domain in the interval 191-453 (FSVHRIIGRG…AQELKTHDFF (263 aa)). ATP is bound by residues 197-205 (IGRGGFGEV) and Lys-220. The active-site Proton acceptor is Asp-317. Positions 454–521 (RGIDWQHVYL…VISERWQQEV (68 aa)) constitute an AGC-kinase C-terminal domain. The PH domain maps to 558–652 (DCIVHGYMLK…WKKELTETFM (95 aa)).

Belongs to the protein kinase superfamily. AGC Ser/Thr protein kinase family. GPRK subfamily. Interacts with GIT1. Post-translationally, ubiquitinated. As to expression, ubiquitous; brain, spleen &gt; heart, lung &gt; kidney.

Its subcellular location is the postsynapse. The protein resides in the presynapse. The catalysed reaction is [beta-adrenergic receptor] + ATP = [beta-adrenergic receptor]-phosphate + ADP + H(+). In terms of biological role, specifically phosphorylates the agonist-occupied form of the beta-adrenergic and closely related receptors. The sequence is that of G protein-coupled receptor kinase 3 from Bos taurus (Bovine).